A 1018-amino-acid chain; its full sequence is Thrombospondin type-1 domain-containing protein 4 (1018 aa).

The signal sequence occupies residues 1 to 26 (MVSYLTSCLSALSTLLLLLGSQLVCP). 3 disordered regions span residues 34–56 (KVPQ…SPGV), 116–240 (HRSQ…PSEA), and 534–623 (SPQV…NWKQ). The 254-residue stretch at 54-307 (PGVWGSWGPW…YKLCNTNACP (254 aa)) folds into the TSP type-1 1 domain. Basic residues predominate over residues 187 to 199 (QRLRRQRPSSRHS). The segment covering 216 to 230 (HQFSHSQPLYQSDSG) has biased composition (polar residues). 2 stretches are compositionally biased toward basic and acidic residues: residues 558 to 573 (QEDR…KEDS) and 592 to 603 (RHPERFPSHRPD). 5 TSP type-1 domains span residues 676-737 (CPAF…KICS), 739-792 (WQIR…DMGP), 793-851 (CAKS…GPCT), 852-911 (GKVE…HLKP), and 912-968 (CGAK…QDCV). Residues 971–1008 (VDENCKDKYYNCNVVVQARLCVYNYYKTACCASCTRVA) enclose the PLAC domain.

As to quaternary structure, isoform 2 interacts with FBN1. Isoform 2 may interact with TGFB1. In terms of tissue distribution, both isoforms are expressed in the embryo from 7 dpc through 17. Isoform 1 is widely expressed in adult tissues. Isoform 2 is detected in brain, spinal cord, eye, kidney, stomach and uterus. Mainly observed in fibrillar extracellular matrices in elastic tissues (at protein level).

The protein localises to the secreted. It localises to the extracellular space. Its subcellular location is the extracellular matrix. Functionally, promotes FBN1 matrix assembly. Attenuates TGFB signaling, possibly by accelerating the sequestration of large latent complexes of TGFB or active TGFB by FBN1 microfibril assembly, thereby negatively regulating the expression of TGFB regulatory targets, such as POSTN. This is Thrombospondin type-1 domain-containing protein 4 (Thsd4) from Mus musculus (Mouse).